Consider the following 399-residue polypeptide: Elongation factor Tu (399 aa).

Residues 10 to 209 (KPHVNIGTIG…EVDAYIPTPE (200 aa)) form the tr-type G domain. Residues 19–26 (GHVDHGKT) form a G1 region. A GTP-binding site is contributed by 19–26 (GHVDHGKT). Threonine 26 lines the Mg(2+) pocket. Residues 60–64 (GITIA) form a G2 region. Residues 81–84 (DCPG) are G3. GTP is bound by residues 81–85 (DCPGH) and 136–139 (NKQD). The interval 136–139 (NKQD) is G4. Residues 174–176 (SAL) are G5.

This sequence belongs to the TRAFAC class translation factor GTPase superfamily. Classic translation factor GTPase family. EF-Tu/EF-1A subfamily. In terms of assembly, monomer.

Its subcellular location is the cytoplasm. It carries out the reaction GTP + H2O = GDP + phosphate + H(+). GTP hydrolase that promotes the GTP-dependent binding of aminoacyl-tRNA to the A-site of ribosomes during protein biosynthesis. The protein is Elongation factor Tu of Helicobacter pylori (strain G27).